The chain runs to 302 residues: Nucleotide-binding protein Rsph17029_0317 (302 aa).

15 to 22 (GPSGAGRT) contributes to the ATP binding site. 62 to 65 (DVRN) contributes to the GTP binding site.

The protein belongs to the RapZ-like family.

Functionally, displays ATPase and GTPase activities. This Cereibacter sphaeroides (strain ATCC 17029 / ATH 2.4.9) (Rhodobacter sphaeroides) protein is Nucleotide-binding protein Rsph17029_0317.